The following is a 1375-amino-acid chain: ARF guanine-nucleotide exchange factor GNL2 (1375 aa).

The SEC7 domain maps to 486–676 (HIRVRKAQKR…SELFQSIATN (191 aa)). Glu-590 is an active-site residue.

In terms of assembly, homodimer. In terms of tissue distribution, preferentially expressed in mature pollen grains and growing pollen tubes.

The protein resides in the cytoplasm. It localises to the cytosol. Its subcellular location is the membrane. Functionally, activates the ARF proteins by exchanging bound GDP for free GTP. Plays a role in vesicular protein sorting. Essential for pollen germination. In Arabidopsis thaliana (Mouse-ear cress), this protein is ARF guanine-nucleotide exchange factor GNL2 (GNL2).